A 148-amino-acid polypeptide reads, in one-letter code: MRYRKGARDTAFLVLYRWDLRGENPGELFKEVVEEKNIKNKDAYEYAKKLVDTAVRHIEEIDSIIEKHLKGWSIDRLGYVERNALRLGVAELIFLKSKEPGRVFIDIVDLVKKYADEKAGKFVNGVLSAIYKAYITSSKEEKPSLKSE.

The protein belongs to the NusB family.

Its function is as follows. Involved in transcription antitermination. Required for transcription of ribosomal RNA (rRNA) genes. Binds specifically to the boxA antiterminator sequence of the ribosomal RNA (rrn) operons. This Aquifex aeolicus (strain VF5) protein is Transcription antitermination protein NusB.